The chain runs to 278 residues: uncharacterized protein (278 aa).

Residues 1–34 (MAKTIKVIRKKDPKKKNLSDPLAKQKLVWKIGHV) are Cytoplasmic-facing. The helical transmembrane segment at 35–55 (LTLVFGLLFSITYFYHVLIFF) threads the bilayer. The Extracellular segment spans residues 56–129 (KYRSWKWLFL…DLLSSENFHT (74 aa)). The chain crosses the membrane as a helical span at residues 130–150 (LLIACLWFFGGGKSFYKILPY). The Cytoplasmic segment spans residues 151-180 (MILSYLHLTKMNYELNANKEEKIPLTPKDR). A helical transmembrane segment spans residues 181 to 201 (KMLHLLAYSELLVILALTLDT). Over 202–205 (ILFK) the chain is Extracellular. Residues 206–222 (TGTSGFMLVIYVGIYWL) traverse the membrane as a helical segment. The Cytoplasmic portion of the chain corresponds to 223–278 (RLNFSPYAQVAVLELLVKFEKYVPKKYRDKWQVIKNFIYMKMKEHEKRTEEVARYA).

The protein resides in the cell membrane. This is an uncharacterized protein from Saccharomyces cerevisiae (strain ATCC 204508 / S288c) (Baker's yeast).